Consider the following 325-residue polypeptide: Glycerol-3-phosphate dehydrogenase [NAD(P)+] (325 aa).

Residues W15, R35, and K107 each coordinate NADPH. Sn-glycerol 3-phosphate is bound by residues K107, G135, and S137. A139 contributes to the NADPH binding site. Sn-glycerol 3-phosphate contacts are provided by K190, D243, S253, R254, and N255. The Proton acceptor role is filled by K190. R254 contributes to the NADPH binding site. NADPH is bound by residues L272 and E274.

This sequence belongs to the NAD-dependent glycerol-3-phosphate dehydrogenase family.

It is found in the cytoplasm. The enzyme catalyses sn-glycerol 3-phosphate + NAD(+) = dihydroxyacetone phosphate + NADH + H(+). It carries out the reaction sn-glycerol 3-phosphate + NADP(+) = dihydroxyacetone phosphate + NADPH + H(+). It functions in the pathway membrane lipid metabolism; glycerophospholipid metabolism. Functionally, catalyzes the reduction of the glycolytic intermediate dihydroxyacetone phosphate (DHAP) to sn-glycerol 3-phosphate (G3P), the key precursor for phospholipid synthesis. The chain is Glycerol-3-phosphate dehydrogenase [NAD(P)+] from Afipia carboxidovorans (strain ATCC 49405 / DSM 1227 / KCTC 32145 / OM5) (Oligotropha carboxidovorans).